Reading from the N-terminus, the 84-residue chain is Small ribosomal subunit protein bS20 (84 aa).

This sequence belongs to the bacterial ribosomal protein bS20 family.

In terms of biological role, binds directly to 16S ribosomal RNA. This Limosilactobacillus fermentum (strain NBRC 3956 / LMG 18251) (Lactobacillus fermentum) protein is Small ribosomal subunit protein bS20.